Reading from the N-terminus, the 288-residue chain is Energy-coupling factor transporter ATP-binding protein EcfA2 (288 aa).

Residues 2–244 form the ABC transporter domain; it reads IKFEKVNYTY…VDFLKAHELG (243 aa). 39–46 lines the ATP pocket; sequence GHTGSGKS. Glu170 acts as the Proton acceptor in catalysis.

This sequence belongs to the ABC transporter superfamily. Energy-coupling factor EcfA family. Forms a stable energy-coupling factor (ECF) transporter complex composed of 2 membrane-embedded substrate-binding proteins (S component), 2 ATP-binding proteins (A component) and 2 transmembrane proteins (T component). In L.lactis forms a stable complex with EcfA' and EcfT and substrate-binding components. In E.coli forms a stable complex with EcfA, EcfT and individually with 3 tested substrate-binding components (BioY, NiaX and ThiT) with a stoichiometry of 1.1:1:1. The core ECF complex interacts with a number of substrate-specific binding components, including BioY, BioY2, HmpT, NiaX, PanT, QueT, RibU and ThiT.

Its subcellular location is the cell membrane. Its function is as follows. ATP-binding (A) component of a common energy-coupling factor (ECF) ABC-transporter complex. Unlike classic ABC transporters this ECF transporter provides the energy necessary to transport a number of different substrates. In this organism these probably include biotin, thiamine precursor, niacin, pantothenic acid, queuosine precursor, riboflavin and thiamine. Uptake of niacin or riboflavin into proteosomes containing EcfA1A2T and Niax or RibU has been demonstrated. Uptake requires hydrolyzable Mg-ATP and is substrate-specific; NiaX-containing proteosomes did not transport riboflavin. This is Energy-coupling factor transporter ATP-binding protein EcfA2 from Lactococcus lactis subsp. cremoris (strain MG1363).